Consider the following 372-residue polypeptide: DNA replication and repair protein RecF (372 aa).

30–37 (GENGQGKT) contributes to the ATP binding site.

Belongs to the RecF family.

The protein resides in the cytoplasm. Its function is as follows. The RecF protein is involved in DNA metabolism; it is required for DNA replication and normal SOS inducibility. RecF binds preferentially to single-stranded, linear DNA. It also seems to bind ATP. The protein is DNA replication and repair protein RecF of Anaeromyxobacter dehalogenans (strain 2CP-C).